The primary structure comprises 553 residues: Ribonuclease J 2 (553 aa).

Zn(2+) contacts are provided by His-69, His-71, His-138, and Asp-160. Substrate is bound at residue 361-365; it reads RVSGH.

This sequence belongs to the metallo-beta-lactamase superfamily. RNA-metabolizing metallo-beta-lactamase-like family. Bacterial RNase J subfamily. As to quaternary structure, homodimer, may be a subunit of the RNA degradosome. The cofactor is Zn(2+).

Its subcellular location is the cytoplasm. In terms of biological role, an RNase that has 5'-3' exonuclease and possibly endonuclease activity. Involved in maturation of rRNA and in some organisms also mRNA maturation and/or decay. Has an overlapping but not completely redundant role with RNase J1 in the decay of mRNA. In Streptococcus pyogenes serotype M3 (strain ATCC BAA-595 / MGAS315), this protein is Ribonuclease J 2.